Here is a 234-residue protein sequence, read N- to C-terminus: Phosphoribosylaminoimidazole-succinocarboxamide synthase (234 aa).

This sequence belongs to the SAICAR synthetase family.

It catalyses the reaction 5-amino-1-(5-phospho-D-ribosyl)imidazole-4-carboxylate + L-aspartate + ATP = (2S)-2-[5-amino-1-(5-phospho-beta-D-ribosyl)imidazole-4-carboxamido]succinate + ADP + phosphate + 2 H(+). It participates in purine metabolism; IMP biosynthesis via de novo pathway; 5-amino-1-(5-phospho-D-ribosyl)imidazole-4-carboxamide from 5-amino-1-(5-phospho-D-ribosyl)imidazole-4-carboxylate: step 1/2. This is Phosphoribosylaminoimidazole-succinocarboxamide synthase from Clostridium botulinum (strain Langeland / NCTC 10281 / Type F).